Reading from the N-terminus, the 163-residue chain is Protein EARLY RESPONSIVE TO DEHYDRATION 15 (163 aa).

The short motif at 10-20 is the PAM2-like element; sequence TLNPDAPLFIP. Positions 118–163 are disordered; the sequence is NGEMVKKSSGNRSPRSIVEPAKYAEKPAKWGNQRVAAAPRNIHQPR.

Interacts with PAB2, PAB4 and PAB8. Interacts with MPC. Expressed in cauline leaves, stems, rosette leaves, immature siliques and primary inflorescences.

The protein resides in the cytoplasm. Its function is as follows. Central component of stress responses that interacts with poly(A)-binding proteins. Negative regulator of abscisic acid (ABA) responses, including resistance to drought and freezing as well as stomatal closure regulation. Mediates resistance to the bacterial necrotroph pathogen Erwinia carotovora subsp. carotovora and promotes the induction of marker genes for systemic acquired resistance (SAR). The chain is Protein EARLY RESPONSIVE TO DEHYDRATION 15 (ERD15) from Arabidopsis thaliana (Mouse-ear cress).